The chain runs to 488 residues: Glutamyl-tRNA(Gln) amidotransferase subunit A (488 aa).

Active-site charge relay system residues include lysine 77 and serine 152. The active-site Acyl-ester intermediate is serine 176.

It belongs to the amidase family. GatA subfamily. Heterotrimer of A, B and C subunits.

The enzyme catalyses L-glutamyl-tRNA(Gln) + L-glutamine + ATP + H2O = L-glutaminyl-tRNA(Gln) + L-glutamate + ADP + phosphate + H(+). Functionally, allows the formation of correctly charged Gln-tRNA(Gln) through the transamidation of misacylated Glu-tRNA(Gln) in organisms which lack glutaminyl-tRNA synthetase. The reaction takes place in the presence of glutamine and ATP through an activated gamma-phospho-Glu-tRNA(Gln). The protein is Glutamyl-tRNA(Gln) amidotransferase subunit A of Streptococcus sanguinis (strain SK36).